The sequence spans 950 residues: Translation initiation factor IF-2 (950 aa).

4 stretches are compositionally biased toward basic and acidic residues: residues K128–A156, A165–K186, K200–R234, and N291–R312. Residues K128–P352 are disordered. Polar residues-rich tracts occupy residues N322 to Q336 and Y343 to P352. Residues E448–K619 form the tr-type G domain. Residues G457 to T464 are G1. G457–T464 lines the GTP pocket. The G2 stretch occupies residues G482–H486. A G3 region spans residues D503–G506. GTP is bound by residues D503 to H507 and N557 to D560. The segment at N557–D560 is G4. Residues S595–K597 are G5.

This sequence belongs to the TRAFAC class translation factor GTPase superfamily. Classic translation factor GTPase family. IF-2 subfamily.

The protein resides in the cytoplasm. In terms of biological role, one of the essential components for the initiation of protein synthesis. Protects formylmethionyl-tRNA from spontaneous hydrolysis and promotes its binding to the 30S ribosomal subunits. Also involved in the hydrolysis of GTP during the formation of the 70S ribosomal complex. This Lactococcus lactis subsp. cremoris (Streptococcus cremoris) protein is Translation initiation factor IF-2 (infB).